Here is a 363-residue protein sequence, read N- to C-terminus: 3-isopropylmalate dehydrogenase (363 aa).

An NAD(+)-binding site is contributed by 78–91 (GPKWENLPPESQPE). R99, R109, R138, and D227 together coordinate substrate. Mg(2+) is bound by residues D227, D251, and D255. 285-297 (GSAPDIAGKNIAN) lines the NAD(+) pocket.

This sequence belongs to the isocitrate and isopropylmalate dehydrogenases family. LeuB type 1 subfamily. In terms of assembly, homodimer. Mg(2+) is required as a cofactor. The cofactor is Mn(2+).

It is found in the cytoplasm. The enzyme catalyses (2R,3S)-3-isopropylmalate + NAD(+) = 4-methyl-2-oxopentanoate + CO2 + NADH. It participates in amino-acid biosynthesis; L-leucine biosynthesis; L-leucine from 3-methyl-2-oxobutanoate: step 3/4. Catalyzes the oxidation of 3-carboxy-2-hydroxy-4-methylpentanoate (3-isopropylmalate) to 3-carboxy-4-methyl-2-oxopentanoate. The product decarboxylates to 4-methyl-2 oxopentanoate. In Salmonella typhi, this protein is 3-isopropylmalate dehydrogenase.